The primary structure comprises 320 residues: Olfactory receptor 51E2 (320 aa).

Residues 1 to 24 (MSSCNFTHATFMLIGIPGLEEAHF) are Extracellular-facing. The N-linked (GlcNAc...) asparagine glycan is linked to Asn-5. A helical transmembrane segment spans residues 25–45 (WFGFPLLSMYAVALFGNCIVV). Over 46-53 (FIVRTERS) the chain is Cytoplasmic. Residues 54-74 (LHAPMYLFLCMLAAIDLALST) form a helical membrane-spanning segment. Residues 75-98 (STMPKILALFWFDSREITFDACLA) lie on the Extracellular side of the membrane. Cys-96 and Cys-178 form a disulfide bridge. A helical membrane pass occupies residues 99–119 (QMFFIHALSAIESTILLAMAF). Residues 120–138 (DRYVAICHPLRHAAVLNNT) lie on the Cytoplasmic side of the membrane. Residues 139–159 (VTVQIGMVALVRGSLFFFPLP) traverse the membrane as a helical segment. The Extracellular segment spans residues 160–195 (LLIKRLAFCHSNVLSHSYCVHQDVMKLAYTDTLPNV). Residues 196–216 (VYGLTAILLVMGVDVMFISLS) traverse the membrane as a helical segment. At 217–236 (YFLIIRAVLQLPSKSERAKA) the chain is on the cytoplasmic side. Residues 237 to 257 (FGTCVSHIGVVLAFYVPLIGL) traverse the membrane as a helical segment. At 258–272 (SVVHRFGNSLDPIVH) the chain is on the extracellular side. Residues 273-293 (VLMGDVYLLLPPVINPIIYGA) form a helical membrane-spanning segment. The Cytoplasmic segment spans residues 294 to 320 (KTKQIRTRVLAMFKISCDKDIEAGGNT).

Belongs to the G-protein coupled receptor 1 family. Expressed in brain and liver. Expressed only in some areas of the brain and in the olfactory epithelium.

It localises to the cell membrane. The protein localises to the early endosome membrane. Olfactory receptor. The activity of this receptor is probably mediated by G-proteins which induce elevation of intracellular Ca(2+), cAMP and activation of phosphorylation of the protein kinases PKA and MAPK3/MAPK1. Activation of OR51E2 may affect melanocyte proliferation, differentiation, and melanogenesis and may increase proliferation and migration of primary retinal pigment epithelial (RPE) cells. Activated by the short chain fatty acids (SCFA), acetate and propionate. In response to SCFA, may positively regulate renin secretion and increase blood pressure. May also be activated by steroid hormones and regulate cell proliferation. Activated by L-lactate in glomus cells. The polypeptide is Olfactory receptor 51E2 (Or51e2) (Rattus norvegicus (Rat)).